A 1142-amino-acid chain; its full sequence is Protein kinase C-like (1142 aa).

Residues 1–67 form the REM-1 1 domain; it reads MNDEDKVHDI…LRELQMRRLG (67 aa). The tract at residues 70–139 is disordered; sequence VDNMSLGASP…PPDSNVPRAR (70 aa). Positions 149–226 constitute an REM-1 2 domain; the sequence is KFDTPHLGPR…LKRYEELHID (78 aa). The C2 domain occupies 231 to 349; it reads GPDDDSINLP…LRRKKIEAEM (119 aa). Residues 357-403 are disordered; it reads ADRVGSRAPPPQFPMGAQSPQFAAPPTSPGSQEQNTMIPPQAPPPSQ. Over residues 385–394 the composition is skewed to polar residues; sequence PGSQEQNTMI. 2 Phorbol-ester/DAG-type zinc fingers span residues 457-505 and 525-576; these read GHKF…VTKC and PHRF…PDFC. 2 disordered regions span residues 592-622 and 651-807; these read TQKK…SGSI and SQTT…TDPG. A compositionally biased stretch (polar residues) spans 613–622; it reads SKTSISSGSI. Low complexity-rich tracts occupy residues 663–677, 712–724, and 741–765; these read TSTS…AAAA, SAQQ…SPQQ, and PQAR…MYQQ. The Protein kinase domain maps to 817-1076; the sequence is FNFLAVLGKG…AQEIMSQPFF (260 aa). ATP is bound by residues 823 to 831 and K846; that span reads LGKGNFGKV. The active-site Proton acceptor is D942. An AGC-kinase C-terminal domain is found at 1077 to 1142; that stretch reads RNINWDDIYH…RGFSYTADFE (66 aa).

The protein belongs to the protein kinase superfamily. AGC Ser/Thr protein kinase family. PKC subfamily.

The catalysed reaction is L-seryl-[protein] + ATP = O-phospho-L-seryl-[protein] + ADP + H(+). The enzyme catalyses L-threonyl-[protein] + ATP = O-phospho-L-threonyl-[protein] + ADP + H(+). This Neurospora crassa (strain ATCC 24698 / 74-OR23-1A / CBS 708.71 / DSM 1257 / FGSC 987) protein is Protein kinase C-like.